The primary structure comprises 558 residues: Potassium-transporting ATPase potassium-binding subunit (558 aa).

The next 12 helical transmembrane spans lie at 2-22 (LQGFVQIALILAILVATAPLL), 66-86 (VSAALISNLVMGVFVFLILMF), 135-155 (ALGFLMFTSAATGIAVAIAFI), 177-197 (ILLPISLVGAILLLVAGVPET), 253-273 (LLETVIMMVIPAGLIITYGIM), 280-300 (GWLIFWMVFILYGILIAIAAV), 327-347 (FGWVLTALWAVSTTGTMCGAV), 354-374 (LMPPGGFVTLSDLFLQIIWGG), 378-398 (GTAYLFVFLILTVFLTGLMVG), 413-433 (IVLASLILLIHPIAILIPTAI), 482-502 (LSASFSLIAGRYVPIVALIFL), and 528-548 (GITAGAIIILGALTFLPILVL).

Belongs to the KdpA family. The system is composed of three essential subunits: KdpA, KdpB and KdpC.

The protein resides in the cell inner membrane. Functionally, part of the high-affinity ATP-driven potassium transport (or Kdp) system, which catalyzes the hydrolysis of ATP coupled with the electrogenic transport of potassium into the cytoplasm. This subunit binds the periplasmic potassium ions and delivers the ions to the membrane domain of KdpB through an intramembrane tunnel. The sequence is that of Potassium-transporting ATPase potassium-binding subunit from Synechocystis sp. (strain ATCC 27184 / PCC 6803 / Kazusa).